The sequence spans 1049 residues: Cilia- and flagella-associated protein 337 (1049 aa).

The EF-hand domain occupies 81-116; sequence GTKEEYGELFDKVDVAQDGFINWDKLTSFILLELYE. WD repeat units lie at residues 138-177, 358-397, 401-440, 487-528, 531-570, and 633-671; these read KHKDTIQKVIFLKNSSHYLTISKEGLLAIWGEHLKLQETF, NIAQGIHAFDYHSRLNLIATAGINNKVCLWNPYVVSKPVG, GHSASVIAVQFFVERKQLFSFSKDKVLRLWDIQHQLSIQR, SHEK…KQFT, HGNAEISTMALDANETRLLTGSTDGTVKIWDFNGYCHHTL, and QHHDDILCAAFLPPQTLVTGSYDGEIVLWNNSTENAHHV. Positions 691-712 are disordered; the sequence is LLSAGRSQPSHPMADHSTTGVR. Over residues 695 to 711 the composition is skewed to polar residues; the sequence is GRSQPSHPMADHSTTGV. WD repeat units follow at residues 719-766, 769-809, and 825-866; these read EGKN…LLAE, AHSG…LNSS, and PHED…VWIF.

Belongs to the CFAP337 family. In terms of assembly, associates with components of the nexin-dynein regulatory complex (N-DRC) and the CFAP184:CFAP263 complex.

It localises to the cell projection. Its subcellular location is the cilium. Associates with components of the nexin-dynein regulatory complex (N-DRC), a key regulator of ciliary/flagellar motility, and might act as an inner dynein arm (IDA) hub or linkage. In Homo sapiens (Human), this protein is Cilia- and flagella-associated protein 337.